Consider the following 339-residue polypeptide: DNA-directed RNA polymerase subunit alpha (339 aa).

The interval 1–233 (MVREEVAGST…DLFLPFLHAE (233 aa)) is alpha N-terminal domain (alpha-NTD). The segment at 264–339 (KKGIPLNCIF…IDLLKNKLSF (76 aa)) is alpha C-terminal domain (alpha-CTD).

This sequence belongs to the RNA polymerase alpha chain family. In terms of assembly, in plastids the minimal PEP RNA polymerase catalytic core is composed of four subunits: alpha, beta, beta', and beta''. When a (nuclear-encoded) sigma factor is associated with the core the holoenzyme is formed, which can initiate transcription.

Its subcellular location is the plastid. The protein resides in the chloroplast. It catalyses the reaction RNA(n) + a ribonucleoside 5'-triphosphate = RNA(n+1) + diphosphate. Functionally, DNA-dependent RNA polymerase catalyzes the transcription of DNA into RNA using the four ribonucleoside triphosphates as substrates. This is DNA-directed RNA polymerase subunit alpha from Agropyron cristatum (Crested wheatgrass).